The following is a 503-amino-acid chain: Transcriptional regulator LovE (503 aa).

A compositionally biased stretch (polar residues) spans 1–14; the sequence is MAADQGTFTTSVTL. Positions 1–21 are disordered; it reads MAADQGTFTTSVTLSPVEGSR. Positions 35–67 form a DNA-binding region, zn(2)-C6 fungal-type; sequence CDRCHAQKIKCTGNKEVTARAPCQRCQQAGLRC. 2 disordered regions span residues 89–124 and 331–362; these read ADPDPCLHMSSPPVPSQSLPLDVSESHSSNTSRQFL and SHMNPWEGSRSESPSRDDTSSTSGHSSVDTIP. A compositionally biased stretch (basic and acidic residues) spans 339-349; sequence SRSESPSRDDT. Over residues 350–359 the composition is skewed to polar residues; it reads SSTSGHSSVD.

It localises to the nucleus. Functionally, transcription factor that regulates the expression of the he gene cluster that mediates the biosynthesis of lovastatin (also known as mevinolin, mevacor or monacolin K), a hypolipidemic inhibitor of (3S)-hydroxymethylglutaryl-coenzyme A (HMG-CoA) reductase (HMGR). In Aspergillus terreus (strain NIH 2624 / FGSC A1156), this protein is Transcriptional regulator LovE.